The sequence spans 127 residues: Aspartate 1-decarboxylase (127 aa).

Ser-25 acts as the Schiff-base intermediate with substrate; via pyruvic acid in catalysis. Ser-25 carries the pyruvic acid (Ser) modification. Thr-57 is a binding site for substrate. Tyr-58 (proton donor) is an active-site residue. Substrate is bound at residue Gly-73 to Ala-75.

It belongs to the PanD family. In terms of assembly, heterooctamer of four alpha and four beta subunits. Pyruvate is required as a cofactor. In terms of processing, is synthesized initially as an inactive proenzyme, which is activated by self-cleavage at a specific serine bond to produce a beta-subunit with a hydroxyl group at its C-terminus and an alpha-subunit with a pyruvoyl group at its N-terminus.

It localises to the cytoplasm. The catalysed reaction is L-aspartate + H(+) = beta-alanine + CO2. It functions in the pathway cofactor biosynthesis; (R)-pantothenate biosynthesis; beta-alanine from L-aspartate: step 1/1. In terms of biological role, catalyzes the pyruvoyl-dependent decarboxylation of aspartate to produce beta-alanine. The sequence is that of Aspartate 1-decarboxylase from Bacillus cytotoxicus (strain DSM 22905 / CIP 110041 / 391-98 / NVH 391-98).